A 383-amino-acid polypeptide reads, in one-letter code: tRNA-specific 2-thiouridylase MnmA (383 aa).

ATP-binding positions include 16 to 23 (AMSGGVDS) and Leu42. Residue Cys110 is the Nucleophile of the active site. The cysteines at positions 110 and 209 are disulfide-linked. Residue Gly134 coordinates ATP. The segment at 159 to 161 (KDQ) is interaction with tRNA. Residue Cys209 is the Cysteine persulfide intermediate of the active site.

It belongs to the MnmA/TRMU family.

It localises to the cytoplasm. It catalyses the reaction S-sulfanyl-L-cysteinyl-[protein] + uridine(34) in tRNA + AH2 + ATP = 2-thiouridine(34) in tRNA + L-cysteinyl-[protein] + A + AMP + diphosphate + H(+). Functionally, catalyzes the 2-thiolation of uridine at the wobble position (U34) of tRNA, leading to the formation of s(2)U34. The protein is tRNA-specific 2-thiouridylase MnmA of Caulobacter vibrioides (strain ATCC 19089 / CIP 103742 / CB 15) (Caulobacter crescentus).